We begin with the raw amino-acid sequence, 359 residues long: Peptide chain release factor 1 (359 aa).

Glutamine 235 is subject to N5-methylglutamine. A disordered region spans residues 282 to 306 (RQRADSERSADRKSQVGSGDRSERI).

Belongs to the prokaryotic/mitochondrial release factor family. Methylated by PrmC. Methylation increases the termination efficiency of RF1.

The protein localises to the cytoplasm. In terms of biological role, peptide chain release factor 1 directs the termination of translation in response to the peptide chain termination codons UAG and UAA. The chain is Peptide chain release factor 1 from Rhizobium rhizogenes (strain K84 / ATCC BAA-868) (Agrobacterium radiobacter).